The sequence spans 674 residues: tRNA wybutosine-synthesizing protein 4 (674 aa).

Residues Arg84, Gly109, Asp140, 184–185, and Glu212 each bind S-adenosyl-L-methionine; that span reads DL.

Belongs to the methyltransferase superfamily. LCMT family.

It catalyses the reaction 7-[(3S)-3-amino-3-carboxypropyl]wyosine(37) in tRNA(Phe) + S-adenosyl-L-methionine = 7-[(3S)-(3-amino-3-methoxycarbonyl)propyl]wyosine(37) in tRNA(Phe) + S-adenosyl-L-homocysteine. The catalysed reaction is 7-[(3S)-(3-amino-3-methoxycarbonyl)propyl]wyosine(37) in tRNA(Phe) + S-adenosyl-L-methionine + CO2 = wybutosine(37) in tRNA(Phe) + S-adenosyl-L-homocysteine + 2 H(+). It participates in tRNA modification; wybutosine-tRNA(Phe) biosynthesis. Functionally, probable S-adenosyl-L-methionine-dependent methyltransferase that acts as a component of the wybutosine biosynthesis pathway. Wybutosine is a hyper modified guanosine with a tricyclic base found at the 3'-position adjacent to the anticodon of eukaryotic phenylalanine tRNA. May methylate the carboxyl group of leucine residues to form alpha-leucine ester residues. The protein is tRNA wybutosine-synthesizing protein 4 (PPM2) of Candida glabrata (strain ATCC 2001 / BCRC 20586 / JCM 3761 / NBRC 0622 / NRRL Y-65 / CBS 138) (Yeast).